Reading from the N-terminus, the 319-residue chain is Protoheme IX farnesyltransferase (319 aa).

Transmembrane regions (helical) follow at residues 34 to 54, 55 to 75, 95 to 115, 119 to 139, 155 to 175, 182 to 202, 221 to 241, 244 to 264, and 291 to 311; these read VMSL…GHIN, PVLG…SGAL, IPAG…LSGF, ILGL…IFFY, IVIG…CVTG, VVLF…LALF, VPTT…IGVV, FMGF…VIFV, and IFYL…AVLM.

This sequence belongs to the UbiA prenyltransferase family. Protoheme IX farnesyltransferase subfamily.

The protein resides in the cell inner membrane. The enzyme catalyses heme b + (2E,6E)-farnesyl diphosphate + H2O = Fe(II)-heme o + diphosphate. It participates in porphyrin-containing compound metabolism; heme O biosynthesis; heme O from protoheme: step 1/1. In terms of biological role, converts heme B (protoheme IX) to heme O by substitution of the vinyl group on carbon 2 of heme B porphyrin ring with a hydroxyethyl farnesyl side group. The protein is Protoheme IX farnesyltransferase of Rhizobium rhizogenes (strain K84 / ATCC BAA-868) (Agrobacterium radiobacter).